The primary structure comprises 78 residues: Acyl carrier protein (78 aa).

In terms of domain architecture, Carrier spans 2–77 (SDTVERVKKI…DAVKFIDKAS (76 aa)). The residue at position 37 (S37) is an O-(pantetheine 4'-phosphoryl)serine.

Belongs to the acyl carrier protein (ACP) family. In terms of processing, 4'-phosphopantetheine is transferred from CoA to a specific serine of apo-ACP by AcpS. This modification is essential for activity because fatty acids are bound in thioester linkage to the sulfhydryl of the prosthetic group.

Its subcellular location is the cytoplasm. The protein operates within lipid metabolism; fatty acid biosynthesis. In terms of biological role, carrier of the growing fatty acid chain in fatty acid biosynthesis. The polypeptide is Acyl carrier protein (Bartonella henselae (strain ATCC 49882 / DSM 28221 / CCUG 30454 / Houston 1) (Rochalimaea henselae)).